A 340-amino-acid chain; its full sequence is tRNA N6-adenosine threonylcarbamoyltransferase (340 aa).

The Fe cation site is built by His-115 and His-119. Substrate-binding positions include 137-141 (IVSGG), Asp-170, Gly-183, Asp-187, and Asn-276. Residue Asp-304 participates in Fe cation binding.

This sequence belongs to the KAE1 / TsaD family. Requires Fe(2+) as cofactor.

Its subcellular location is the cytoplasm. It carries out the reaction L-threonylcarbamoyladenylate + adenosine(37) in tRNA = N(6)-L-threonylcarbamoyladenosine(37) in tRNA + AMP + H(+). In terms of biological role, required for the formation of a threonylcarbamoyl group on adenosine at position 37 (t(6)A37) in tRNAs that read codons beginning with adenine. Is involved in the transfer of the threonylcarbamoyl moiety of threonylcarbamoyl-AMP (TC-AMP) to the N6 group of A37, together with TsaE and TsaB. TsaD likely plays a direct catalytic role in this reaction. This Staphylococcus epidermidis (strain ATCC 35984 / DSM 28319 / BCRC 17069 / CCUG 31568 / BM 3577 / RP62A) protein is tRNA N6-adenosine threonylcarbamoyltransferase.